The chain runs to 563 residues: Serine palmitoyltransferase 3 (563 aa).

A compositionally biased stretch (polar residues) spans 1 to 29; the sequence is MANLNDSAVTNGTLHNPKTQQGKRQSTGC. The disordered stretch occupies residues 1–32; sequence MANLNDSAVTNGTLHNPKTQQGKRQSTGCVKN. A helical transmembrane segment spans residues 59–79; it reads PLYVYVLTYMGYGIGILFGYL. At K371 the chain carries N6-(pyridoxal phosphate)lysine.

It belongs to the class-II pyridoxal-phosphate-dependent aminotransferase family. In terms of assembly, component of the serine palmitoyltransferase (SPT) complex, which is composed of SPTLC1, SPTLC2 or SPTLC3 and SPTSSA or SPTSSB. The heterodimer consisting of SPTLC1 and SPTLC2/SPTLC3 forms the catalytic core of the enzyme, while SPTSSA or SPTSSB subunits determine substrate specificity. SPT also interacts with ORMDL proteins, especially ORMDL3, which negatively regulate SPT activity in the presence of ceramides. Pyridoxal 5'-phosphate is required as a cofactor. As to expression, expressed in white and brown adipose tissues.

It localises to the endoplasmic reticulum membrane. The enzyme catalyses L-serine + hexadecanoyl-CoA + H(+) = 3-oxosphinganine + CO2 + CoA. It catalyses the reaction dodecanoyl-CoA + L-serine + H(+) = 3-oxotetradecasphinganine + CO2 + CoA. It carries out the reaction tetradecanoyl-CoA + L-serine + H(+) = 3-oxohexadecasphinganine + CO2 + CoA. The catalysed reaction is octadecanoyl-CoA + L-serine + H(+) = 3-oxoeicosasphinganine + CO2 + CoA. It functions in the pathway lipid metabolism; sphingolipid metabolism. With respect to regulation, SPT complex catalytic activity is negatively regulated by ORMDL proteins, including ORMDL3, in the presence of ceramides. This mechanism allows to maintain ceramide levels at sufficient concentrations for the production of complex sphingolipids, but which prevents the accumulation of ceramides to levels that trigger apoptosis. Component of the serine palmitoyltransferase multisubunit enzyme (SPT) that catalyzes the initial and rate-limiting step in sphingolipid biosynthesis by condensing L-serine and activated acyl-CoA (most commonly palmitoyl-CoA) to form long-chain bases. The SPT complex is composed of SPTLC1, SPTLC2 or SPTLC3 and SPTSSA or SPTSSB. Within this complex, the heterodimer consisting of SPTLC1 and SPTLC2/SPTLC3 forms the catalytic core. The composition of the serine palmitoyltransferase (SPT) complex determines the substrate preference. The SPTLC1-SPTLC2-SPTSSA complex shows a strong preference for C16-CoA substrate, while the SPTLC1-SPTLC3-SPTSSA isozyme uses both C14-CoA and C16-CoA as substrates, with a slight preference for C14-CoA. The SPTLC1-SPTLC2-SPTSSB complex shows a strong preference for C18-CoA substrate, while the SPTLC1-SPTLC3-SPTSSB isozyme displays an ability to use a broader range of acyl-CoAs, without apparent preference. This chain is Serine palmitoyltransferase 3, found in Mus musculus (Mouse).